The sequence spans 183 residues: Bifunctional protein PyrR (183 aa).

Residues 102-114 (VVLVDDVLYTGRT) carry the PRPP-binding motif.

The protein belongs to the purine/pyrimidine phosphoribosyltransferase family. PyrR subfamily. As to quaternary structure, homodimer and homohexamer; in equilibrium.

The catalysed reaction is UMP + diphosphate = 5-phospho-alpha-D-ribose 1-diphosphate + uracil. In terms of biological role, regulates transcriptional attenuation of the pyrimidine nucleotide (pyr) operon by binding in a uridine-dependent manner to specific sites on pyr mRNA. This disrupts an antiterminator hairpin in the RNA and favors formation of a downstream transcription terminator, leading to a reduced expression of downstream genes. Also displays a weak uracil phosphoribosyltransferase activity which is not physiologically significant. The protein is Bifunctional protein PyrR of Listeria monocytogenes serotype 4a (strain HCC23).